A 256-amino-acid polypeptide reads, in one-letter code: MHFNSNFKECFNKIAKKVNSLDSEYYEFSSFIERIRTTFGLLIALTVLSNLIIISFVLIWFFTDGFGQLRLLFFTLFIPFFISLLVAIFLIFLNNSFRNFFQINEKNWLFLWTCVFSSLPIFNLWLIVRLNKTIKNFASDYGFKIVNKYNSLTSGIFVFDFADYVSFEANLTNWKNTNDKNRNFVNFFETISKEKTGVVQKPVLNFQRLYVNRLYYQSKLSVGSNQQTPQTAFDNLRNYVENKQRETVRVKQYILT.

3 helical membrane passes run 42 to 62 (LIAL…IWFF), 73 to 93 (FFTL…LIFL), and 108 to 128 (WLFL…WLIV).

The protein localises to the cell membrane. This is an uncharacterized protein from Mycoplasma genitalium (strain ATCC 33530 / DSM 19775 / NCTC 10195 / G37) (Mycoplasmoides genitalium).